The sequence spans 216 residues: Pyridoxine/pyridoxamine 5'-phosphate oxidase (216 aa).

Residues arginine 12–tyrosine 15 and lysine 70 each bind substrate. Residues arginine 65–lysine 70, tyrosine 80–threonine 81, arginine 86, lysine 87, and glutamine 109 contribute to the FMN site. Substrate-binding residues include tyrosine 127 and arginine 131. Residues glutamine 144–serine 145 and tryptophan 189 each bind FMN. A substrate-binding site is contributed by arginine 195–histidine 197. An FMN-binding site is contributed by arginine 199.

It belongs to the pyridoxamine 5'-phosphate oxidase family. In terms of assembly, homodimer. FMN serves as cofactor.

It catalyses the reaction pyridoxamine 5'-phosphate + O2 + H2O = pyridoxal 5'-phosphate + H2O2 + NH4(+). It carries out the reaction pyridoxine 5'-phosphate + O2 = pyridoxal 5'-phosphate + H2O2. It functions in the pathway cofactor metabolism; pyridoxal 5'-phosphate salvage; pyridoxal 5'-phosphate from pyridoxamine 5'-phosphate: step 1/1. Its pathway is cofactor metabolism; pyridoxal 5'-phosphate salvage; pyridoxal 5'-phosphate from pyridoxine 5'-phosphate: step 1/1. In terms of biological role, catalyzes the oxidation of either pyridoxine 5'-phosphate (PNP) or pyridoxamine 5'-phosphate (PMP) into pyridoxal 5'-phosphate (PLP). This chain is Pyridoxine/pyridoxamine 5'-phosphate oxidase, found in Blochmanniella pennsylvanica (strain BPEN).